The primary structure comprises 264 residues: NAD kinase 1 (264 aa).

Asp45 serves as the catalytic Proton acceptor. Residues 45 to 46 (DG), 122 to 123 (NE), Arg148, Asp150, 161 to 166 (TAYNKS), and Ala185 contribute to the NAD(+) site.

The protein belongs to the NAD kinase family. A divalent metal cation serves as cofactor.

The protein localises to the cytoplasm. It carries out the reaction NAD(+) + ATP = ADP + NADP(+) + H(+). In terms of biological role, involved in the regulation of the intracellular balance of NAD and NADP, and is a key enzyme in the biosynthesis of NADP. Catalyzes specifically the phosphorylation on 2'-hydroxyl of the adenosine moiety of NAD to yield NADP. The polypeptide is NAD kinase 1 (Listeria innocua serovar 6a (strain ATCC BAA-680 / CLIP 11262)).